A 101-amino-acid polypeptide reads, in one-letter code: Ascorbate-specific PTS system EIIB component (101 aa).

Residues 1–100 (MTVRILAVCG…VIKEHFPQDV (100 aa)) form the PTS EIIB type-2 domain. The active-site Phosphocysteine intermediate is Cys9. The residue at position 9 (Cys9) is a Phosphocysteine.

The protein resides in the cytoplasm. The enzyme catalyses N(pros)-phospho-L-histidyl-[protein] + L-ascorbate(out) = L-ascorbate 6-phosphate(in) + L-histidyl-[protein]. In terms of biological role, the phosphoenolpyruvate-dependent sugar phosphotransferase system (sugar PTS), a major carbohydrate active transport system, catalyzes the phosphorylation of incoming sugar substrates concomitantly with their translocation across the cell membrane. The enzyme II UlaABC PTS system is involved in ascorbate transport. This Escherichia coli O157:H7 protein is Ascorbate-specific PTS system EIIB component (ulaB).